A 209-amino-acid chain; its full sequence is Octanoyltransferase (209 aa).

The region spanning 28–203 (NATPETLLLL…RFQGLLDEWL (176 aa)) is the BPL/LPL catalytic domain. Substrate is bound by residues 66 to 73 (RGGDVTFH), 133 to 135 (AIG), and 146 to 148 (GFA). C164 serves as the catalytic Acyl-thioester intermediate.

Belongs to the LipB family.

It localises to the cytoplasm. The enzyme catalyses octanoyl-[ACP] + L-lysyl-[protein] = N(6)-octanoyl-L-lysyl-[protein] + holo-[ACP] + H(+). It functions in the pathway protein modification; protein lipoylation via endogenous pathway; protein N(6)-(lipoyl)lysine from octanoyl-[acyl-carrier-protein]: step 1/2. In terms of biological role, catalyzes the transfer of endogenously produced octanoic acid from octanoyl-acyl-carrier-protein onto the lipoyl domains of lipoate-dependent enzymes. Lipoyl-ACP can also act as a substrate although octanoyl-ACP is likely to be the physiological substrate. The sequence is that of Octanoyltransferase from Pelobacter propionicus (strain DSM 2379 / NBRC 103807 / OttBd1).